We begin with the raw amino-acid sequence, 197 residues long: Holliday junction branch migration complex subunit RuvA (197 aa).

A domain I region spans residues 1 to 63 (MYAYLKGIIT…EDAHLLYGFR (63 aa)). The domain II stretch occupies residues 64 to 142 (SEDEKKLFLS…VAGDDLPAKV (79 aa)). Residues 143–147 (AVQAS) form a flexible linker region. Residues 148–197 (AENQELEEAMEAMLALGYKATELKKIKKFFEGTTDTAENYIKSALKMLVK) are domain III.

It belongs to the RuvA family. As to quaternary structure, homotetramer. Forms an RuvA(8)-RuvB(12)-Holliday junction (HJ) complex. HJ DNA is sandwiched between 2 RuvA tetramers; dsDNA enters through RuvA and exits via RuvB. An RuvB hexamer assembles on each DNA strand where it exits the tetramer. Each RuvB hexamer is contacted by two RuvA subunits (via domain III) on 2 adjacent RuvB subunits; this complex drives branch migration. In the full resolvosome a probable DNA-RuvA(4)-RuvB(12)-RuvC(2) complex forms which resolves the HJ.

The protein resides in the cytoplasm. Functionally, the RuvA-RuvB-RuvC complex processes Holliday junction (HJ) DNA during genetic recombination and DNA repair, while the RuvA-RuvB complex plays an important role in the rescue of blocked DNA replication forks via replication fork reversal (RFR). RuvA specifically binds to HJ cruciform DNA, conferring on it an open structure. The RuvB hexamer acts as an ATP-dependent pump, pulling dsDNA into and through the RuvAB complex. HJ branch migration allows RuvC to scan DNA until it finds its consensus sequence, where it cleaves and resolves the cruciform DNA. This Streptococcus pneumoniae (strain Hungary19A-6) protein is Holliday junction branch migration complex subunit RuvA.